Here is a 292-residue protein sequence, read N- to C-terminus: Probable starch degradation products transport system permease protein AmyD (292 aa).

6 helical membrane passes run tryptophan 15–isoleucine 35, phenylalanine 77–threonine 97, phenylalanine 110–valine 130, phenylalanine 156–isoleucine 176, valine 205–phenylalanine 225, and methionine 260–isoleucine 280. Residues isoleucine 71–glutamine 281 enclose the ABC transmembrane type-1 domain.

Belongs to the binding-protein-dependent transport system permease family. MalFG subfamily.

The protein resides in the cell membrane. In terms of biological role, probably part of a binding-protein-dependent transport system starch degradation products. Probably responsible for the translocation of the substrate across the membrane. The protein is Probable starch degradation products transport system permease protein AmyD (amyD) of Thermoanaerobacterium thermosulfurigenes (Clostridium thermosulfurogenes).